Reading from the N-terminus, the 216-residue chain is Protein-L-isoaspartate O-methyltransferase (216 aa).

S66 is a catalytic residue.

It belongs to the methyltransferase superfamily. L-isoaspartyl/D-aspartyl protein methyltransferase family.

Its subcellular location is the cytoplasm. It carries out the reaction [protein]-L-isoaspartate + S-adenosyl-L-methionine = [protein]-L-isoaspartate alpha-methyl ester + S-adenosyl-L-homocysteine. Functionally, catalyzes the methyl esterification of L-isoaspartyl residues in peptides and proteins that result from spontaneous decomposition of normal L-aspartyl and L-asparaginyl residues. It plays a role in the repair and/or degradation of damaged proteins. The chain is Protein-L-isoaspartate O-methyltransferase from Colwellia psychrerythraea (strain 34H / ATCC BAA-681) (Vibrio psychroerythus).